Consider the following 532-residue polypeptide: MDTTKSLLSTLIAIMIPLSLGSVSSPNLLPTPPMGFNNWARFMCDLNETLFLETASAMISTGLLEAGYNRVNLDDCWMAYDRAADSSLQWNTTKFPHGIPWLARHLKAQGFHVGIYEDAGNLTCGGYPGSFGHEALDAQTFAAWGIDYLKLDGCNVFPEHSRTLEEEYKARYAHWHSILKQMHHPLIFSESAPAYFADPANLTSWYEVMDWVPAFGELARHSTDILVYVGEGSAWDSIMVNYRYNTLLARYQRPGYINDPDFLIPDHPGLTLEEKRSQFALWASFSAPLIVSAYIPGLSSEELAILRNEELIRVDQDVLGLQATLASRGLEVDVLTRSLEGGDRLLTVLNRGDGVAVVSVPVEWMGLQRGCPYVVKNLWDGEVQVLEEEIVIRLNSHATQVYRIALPDECSTVIPTGIVFNTASGNCLTDENGERVGFEACRGSETQIWQVSELGYLRPLSRTSHCLTGGSQASVQLCTEQKNQQWAYAITGILKNEHTEMCLTEGTGISQCGFERDSQVFGLPSGVDIKPS.

An N-terminal signal peptide occupies residues 1-21; the sequence is MDTTKSLLSTLIAIMIPLSLG. The cysteines at positions 44 and 76 are disulfide-linked. N-linked (GlcNAc...) asparagine glycans are attached at residues Asn-47, Asn-91, and Asn-121. A disulfide bridge links Cys-124 with Cys-154. Asp-152 acts as the Nucleophile in catalysis. Residue Asn-201 is glycosylated (N-linked (GlcNAc...) asparagine). Asp-210 serves as the catalytic Proton donor. One can recognise a Ricin B-type lectin domain in the interval 410-531; the sequence is CSTVIPTGIV…GLPSGVDIKP (122 aa). 2 disulfides stabilise this stretch: Cys-427–Cys-441 and Cys-466–Cys-478.

The protein belongs to the glycosyl hydrolase 27 family.

It localises to the secreted. The enzyme catalyses Hydrolysis of terminal, non-reducing alpha-D-galactose residues in alpha-D-galactosides, including galactose oligosaccharides, galactomannans and galactolipids.. Its function is as follows. Hydrolyzes a variety of simple alpha-D-galactoside as well as more complex molecules such as oligosaccharides and polysaccharides. This is Probable alpha-galactosidase A (aglA) from Aspergillus fumigatus (strain ATCC MYA-4609 / CBS 101355 / FGSC A1100 / Af293) (Neosartorya fumigata).